The primary structure comprises 127 residues: Apolipoprotein C-IV (127 aa).

An N-terminal signal peptide occupies residues 1-27; it reads MSLLRNRLQDLPALCLCVLVLACIGAC.

Belongs to the apolipoprotein C4 family.

It is found in the secreted. In terms of biological role, may participate in lipoprotein metabolism. The polypeptide is Apolipoprotein C-IV (APOC4) (Papio hamadryas (Hamadryas baboon)).